The primary structure comprises 411 residues: Branched-chain-amino-acid aminotransferase, cytosolic (411 aa).

At lysine 247 the chain carries N6-(pyridoxal phosphate)lysine.

This sequence belongs to the class-IV pyridoxal-phosphate-dependent aminotransferase family. In terms of assembly, homodimer. The cofactor is pyridoxal 5'-phosphate. In terms of processing, the N-terminus is blocked. Brain, low expression in ovary and placenta, but not found in liver, kidney, and skeletal muscle.

The protein resides in the cytoplasm. It catalyses the reaction L-leucine + 2-oxoglutarate = 4-methyl-2-oxopentanoate + L-glutamate. The enzyme catalyses L-isoleucine + 2-oxoglutarate = (S)-3-methyl-2-oxopentanoate + L-glutamate. It carries out the reaction L-valine + 2-oxoglutarate = 3-methyl-2-oxobutanoate + L-glutamate. Functionally, catalyzes the first reaction in the catabolism of the essential branched chain amino acids leucine, isoleucine, and valine. In Rattus norvegicus (Rat), this protein is Branched-chain-amino-acid aminotransferase, cytosolic (Bcat1).